A 123-amino-acid chain; its full sequence is Large ribosomal subunit protein bL20 (123 aa).

The segment covering 1–15 (MARVKRSVNAKKKRR) has biased composition (basic residues). Positions 1–23 (MARVKRSVNAKKKRREVLDQASG) are disordered.

It belongs to the bacterial ribosomal protein bL20 family.

In terms of biological role, binds directly to 23S ribosomal RNA and is necessary for the in vitro assembly process of the 50S ribosomal subunit. It is not involved in the protein synthesizing functions of that subunit. The protein is Large ribosomal subunit protein bL20 of Cutibacterium acnes (strain DSM 16379 / KPA171202) (Propionibacterium acnes).